A 240-amino-acid chain; its full sequence is DNA repair protein RecO (240 aa).

It belongs to the RecO family.

Involved in DNA repair and RecF pathway recombination. The chain is DNA repair protein RecO from Actinobacillus pleuropneumoniae serotype 5b (strain L20).